The following is a 701-amino-acid chain: Polyribonucleotide nucleotidyltransferase (701 aa).

Asp489 and Asp495 together coordinate Mg(2+). One can recognise a KH domain in the interval 556-615; sequence PRIHTMKIHPDKIREVIGSGGKVIRSITEETGCAIDIEDDGTIRIASSDQASAEQAVKII. Residues 625–693 enclose the S1 motif domain; that stretch reads GQVYEGKVVR…RQGRVKLTMK (69 aa).

Belongs to the polyribonucleotide nucleotidyltransferase family. The cofactor is Mg(2+).

Its subcellular location is the cytoplasm. It catalyses the reaction RNA(n+1) + phosphate = RNA(n) + a ribonucleoside 5'-diphosphate. Involved in mRNA degradation. Catalyzes the phosphorolysis of single-stranded polyribonucleotides processively in the 3'- to 5'-direction. The sequence is that of Polyribonucleotide nucleotidyltransferase from Magnetococcus marinus (strain ATCC BAA-1437 / JCM 17883 / MC-1).